A 503-amino-acid chain; its full sequence is Zinc metalloproteinase nas-14 (503 aa).

Residues 1-25 (MRLLYSLFHCSAFLVGFTLSVGVLP) form the signal peptide. One can recognise a Peptidase M12A domain in the interval 116 to 312 (NLVTYPDKLW…KKVNKLYQCG (197 aa)). 2 disulfides stabilise this stretch: C158–C311 and C182–C202. A glycan (N-linked (GlcNAc...) asparagine) is linked at N192. Residue H210 coordinates Zn(2+). E211 is a catalytic residue. Positions 214 and 220 each coordinate Zn(2+). Low complexity predominate over residues 317 to 340 (TSSTTTTTTTTTTTTTTEEPTTTT). Positions 317 to 377 (TSSTTTTTTT…TPKPVERSRN (61 aa)) are disordered. The span at 342–351 (VEEKPKDKKV) shows a compositional bias: basic and acidic residues. Over residues 352–370 (SSTTTTTKKPTTTTTTTPK) the composition is skewed to low complexity. Disulfide bonds link C380/C414, C387/C407, and C396/C411. Positions 380 to 414 (CEDLNAHCGMWEQLGHCQHSVKYMAHYCRKACNLC) constitute a ShKT 1 domain. The segment at 422–464 (TTTTPKPVPRNKEKENKSASSTTRGTSTATSTTPKTTTTTTSA) is disordered. Residue N437 is glycosylated (N-linked (GlcNAc...) asparagine). Residues 439 to 464 (SASSTTRGTSTATSTTPKTTTTTTSA) show a composition bias toward low complexity. Intrachain disulfides connect C469/C503, C476/C496, and C485/C500. In terms of domain architecture, ShKT 2 spans 469–503 (CEDKNLFCSYWAKIGECNSESKFMKIFCKASCGKC).

The cofactor is Zn(2+). As to expression, expressed in pharyngeal muscles and mc cells.

It localises to the secreted. Its function is as follows. Metalloprotease. This Caenorhabditis elegans protein is Zinc metalloproteinase nas-14 (nas-14).